Here is a 491-residue protein sequence, read N- to C-terminus: Ketol-acid reductoisomerase (NADP(+)) (491 aa).

Positions 15–208 (AQLGKCRFMG…GGHRAGVLES (194 aa)) constitute a KARI N-terminal Rossmann domain. Residues 45–48 (CGAQ), arginine 68, arginine 76, serine 78, and 108–110 (DKQ) contribute to the NADP(+) site. The active site involves histidine 132. Glycine 158 provides a ligand contact to NADP(+). KARI C-terminal knotted domains are found at residues 209 to 344 (SFVA…TAPQ) and 345 to 484 (YEGK…MTDM). Mg(2+) is bound by residues aspartate 217, glutamate 221, glutamate 389, and glutamate 393. Serine 414 is a substrate binding site.

It belongs to the ketol-acid reductoisomerase family. Requires Mg(2+) as cofactor.

It catalyses the reaction (2R)-2,3-dihydroxy-3-methylbutanoate + NADP(+) = (2S)-2-acetolactate + NADPH + H(+). The catalysed reaction is (2R,3R)-2,3-dihydroxy-3-methylpentanoate + NADP(+) = (S)-2-ethyl-2-hydroxy-3-oxobutanoate + NADPH + H(+). Its pathway is amino-acid biosynthesis; L-isoleucine biosynthesis; L-isoleucine from 2-oxobutanoate: step 2/4. It functions in the pathway amino-acid biosynthesis; L-valine biosynthesis; L-valine from pyruvate: step 2/4. In terms of biological role, involved in the biosynthesis of branched-chain amino acids (BCAA). Catalyzes an alkyl-migration followed by a ketol-acid reduction of (S)-2-acetolactate (S2AL) to yield (R)-2,3-dihydroxy-isovalerate. In the isomerase reaction, S2AL is rearranged via a Mg-dependent methyl migration to produce 3-hydroxy-3-methyl-2-ketobutyrate (HMKB). In the reductase reaction, this 2-ketoacid undergoes a metal-dependent reduction by NADPH to yield (R)-2,3-dihydroxy-isovalerate. In Escherichia coli O157:H7, this protein is Ketol-acid reductoisomerase (NADP(+)).